Here is a 104-residue protein sequence, read N- to C-terminus: Small ribosomal subunit protein uS10 (104 aa).

The protein belongs to the universal ribosomal protein uS10 family. As to quaternary structure, part of the 30S ribosomal subunit.

Its function is as follows. Involved in the binding of tRNA to the ribosomes. This Xanthomonas oryzae pv. oryzae (strain MAFF 311018) protein is Small ribosomal subunit protein uS10.